The primary structure comprises 187 residues: MMKIIAFVGMPASGKSEASRIAAEMGIPVIIMGDVIRKEVLKRGLEPNDSNTGMVATDLRKHEGMGAVARRCISQIRETGSELVVVDGVRGIAEVECFRKEFGKGFILISIYAPIEVRFSRVQKRGRSDDMNSIEGLRHRDERELSWGMGEAIDASNVEIENNFTLETFRKDVRDVLSNYLEADLEK.

Position 9–16 (9–16 (GMPASGKS)) interacts with ATP.

This sequence belongs to the UPF0200 family.

This Methanosarcina mazei (strain ATCC BAA-159 / DSM 3647 / Goe1 / Go1 / JCM 11833 / OCM 88) (Methanosarcina frisia) protein is UPF0200 protein MM_1313.